We begin with the raw amino-acid sequence, 574 residues long: Glutamyl-tRNA(Gln) amidotransferase subunit B, mitochondrial (574 aa).

The N-terminal 12 residues, methionine 1–proline 12, are a transit peptide targeting the mitochondrion. Residues proline 34 to glutamate 62 form a disordered region.

This sequence belongs to the GatB/GatE family. GatB subfamily. As to quaternary structure, subunit of the heterotrimeric GatCAB amidotransferase (AdT) complex, composed of A, B and C subunits.

The protein localises to the mitochondrion. It carries out the reaction L-glutamyl-tRNA(Gln) + L-glutamine + ATP + H2O = L-glutaminyl-tRNA(Gln) + L-glutamate + ADP + phosphate + H(+). Allows the formation of correctly charged Gln-tRNA(Gln) through the transamidation of misacylated Glu-tRNA(Gln) in the mitochondria. The reaction takes place in the presence of glutamine and ATP through an activated gamma-phospho-Glu-tRNA(Gln). This Ajellomyces capsulatus (strain H143) (Darling's disease fungus) protein is Glutamyl-tRNA(Gln) amidotransferase subunit B, mitochondrial.